The sequence spans 1499 residues: Rap guanine nucleotide exchange factor 2 (1499 aa).

Disordered regions lie at residues 40 to 59 and 68 to 101; these read HVSSSHSGCSITSDSGSSSL and SEAGDMDLSGLPETAVDSEDDDDEEDIERASDPL. Positions 83–94 are enriched in acidic residues; it reads VDSEDDDDEEDI. 135–254 serves as a coordination point for a nucleoside 3',5'-cyclic phosphate; that stretch reads AFANMTMSVR…VEEEGEIVMV (120 aa). The N-terminal Ras-GEF domain occupies 267–380; sequence KGHIVIKGTS…RLLNIACAAK (114 aa). Positions 385–470 constitute a PDZ domain; the sequence is LMTLTKPSRE…ITVKTNLFVF (86 aa). Ser501 carries the phosphoserine modification. The 87-residue stretch at 606–692 folds into the Ras-associating domain; sequence PDQVLRVFKA…GRYYLKNNME (87 aa). Thr644 carries the post-translational modification Phosphothreonine; by PLK2. Positions 717–944 constitute a Ras-GEF domain; that stretch reads STVEVATQLS…SQGSTNATVL (228 aa). Phosphoserine; by PLK2 is present on Ser806. Residue Ser930 is modified to Phosphoserine. Ser933 bears the Phosphoserine; by PLK2 mark. A disordered region spans residues 1002–1050; sequence PATNTLPKNPGDKKPVKSETSPVAPRAGSQQKAQSLPQPQQQPPPAHKI. Phosphoserine is present on Ser1022. Over residues 1031-1040 the composition is skewed to low complexity; that stretch reads QQKAQSLPQP. 6 positions are modified to phosphoserine: Ser1080, Ser1089, Ser1095, Ser1116, Ser1120, and Ser1159. Positions 1095–1160 are disordered; that stretch reads SLERHKKQAE…RSSIVSNSSF (66 aa). Composition is skewed to low complexity over residues 1111-1125 and 1141-1160; these read SSQLSSPPTSPQSSP and SDSGHSEISSRSSIVSNSSF. Position 1176 is a phosphoserine; by PLK2 (Ser1176). 2 disordered regions span residues 1224 to 1256 and 1305 to 1499; these read PSTEELSQDQGDRASLDAADSGRGSWTSCSSGS and TKYN…VSAV. 2 stretches are compositionally biased toward polar residues: residues 1247–1256 and 1307–1331; these read GSWTSCSSGS and YNRQNQSRESLEQAQSRASWASSTG. Low complexity predominate over residues 1355 to 1366; that stretch reads EAESSSLTSVTT. Positions 1441–1462 are enriched in polar residues; the sequence is SSDTAGPSSVQQPHGHPTSSRP. Over residues 1488–1499 the composition is skewed to acidic residues; the sequence is TEEDEDEQVSAV.

This sequence belongs to the RAPGEF2 family. In terms of assembly, interacts with CDH1, CTNNB1 and TJP1. Interacts (via C-terminal domain) with MAGI2 (via PDZ and WW domains); the interaction occurs before or after NGF stimulation. Interacts with KIDINS220 and NTRK1; the interactions occur after NGF stimulation. Found in a complex, at least composed of KIDINS220, MAGI2, NTRK1 and RAPGEF2; the complex is mainly formed at late endosomes in a neuronal growth factor (NGF)-dependent manner. Interacts (via C-terminal domain) with NEDD4 (via WW domains); this interaction leads to ubiquitination and degradation via the proteasome pathway in a cAMP-independent manner. Interacts with MAGI1 isoform 3 (via PDZ domain). Interacts with ADRB1 (via C-terminal PDZ motif); the interaction is direct. Interacts (via Ras-associating domain) with RAP1A (via GTP-bound active form). Interacts weakly with HRAS (via GDP- and GTP-bound forms). Interacts (via C-terminal domain) with MAGI2 (via PDZ and WW domains). Post-translationally, ubiquitinated by NEDD4, leading to proteasomal degradation. Phosphorylation by PLK2 promotes its activity. Expressed in primary neuronal and endocrine cells (at protein level). Highest expression levels in brain. Lower expression levels in heart, kidney, lung, placenta and blood leukocytes.

The protein localises to the cytoplasm. Its subcellular location is the perinuclear region. The protein resides in the cell membrane. It localises to the late endosome. It is found in the cell junction. In terms of biological role, functions as a guanine nucleotide exchange factor (GEF), which activates Rap and Ras family of small GTPases by exchanging bound GDP for free GTP in a cAMP-dependent manner. Serves as a link between cell surface receptors and Rap/Ras GTPases in intracellular signaling cascades. Also acts as an effector for Rap1 by direct association with Rap1-GTP thereby leading to the amplification of Rap1-mediated signaling. Shows weak activity on HRAS. It is controversial whether RAPGEF2 binds cAMP and cGMP or not. Its binding to ligand-activated beta-1 adrenergic receptor ADRB1 leads to the Ras activation through the G(s)-alpha signaling pathway. Involved in the cAMP-induced Ras and Erk1/2 signaling pathway that leads to sustained inhibition of long term melanogenesis by reducing dendrite extension and melanin synthesis. Also provides inhibitory signals for cell proliferation of melanoma cells and promotes their apoptosis in a cAMP-independent nanner. Regulates cAMP-induced neuritogenesis by mediating the Rap1/B-Raf/ERK signaling through a pathway that is independent on both PKA and RAPGEF3/RAPGEF4. Involved in neuron migration and in the formation of the major forebrain fiber connections forming the corpus callosum, the anterior commissure and the hippocampal commissure during brain development. Involved in neuronal growth factor (NGF)-induced sustained activation of Rap1 at late endosomes and in brain-derived neurotrophic factor (BDNF)-induced axon outgrowth of hippocampal neurons. Plays a role in the regulation of embryonic blood vessel formation and in the establishment of basal junction integrity and endothelial barrier function. May be involved in the regulation of the vascular endothelial growth factor receptor KDR and cadherin CDH5 expression at allantois endothelial cell-cell junctions. The protein is Rap guanine nucleotide exchange factor 2 (RAPGEF2) of Homo sapiens (Human).